The sequence spans 126 residues: UPF0102 protein Mlg_2205 (126 aa).

This sequence belongs to the UPF0102 family.

This Alkalilimnicola ehrlichii (strain ATCC BAA-1101 / DSM 17681 / MLHE-1) protein is UPF0102 protein Mlg_2205.